The following is a 203-amino-acid chain: NAD(P)H dehydrogenase (quinone) (203 aa).

Residues 3–194 (VLIVYYSMYG…AGARFQGRYV (192 aa)) enclose the Flavodoxin-like domain. Residues 9-14 (SMYGHI) and 82-84 (TRF) each bind FMN. Position 11 (Tyr11) interacts with NAD(+). Residue Trp102 coordinates substrate. FMN is bound by residues 117 to 123 (SSATQHG) and His138.

Belongs to the WrbA family. FMN serves as cofactor.

It catalyses the reaction a quinone + NADH + H(+) = a quinol + NAD(+). The enzyme catalyses a quinone + NADPH + H(+) = a quinol + NADP(+). The chain is NAD(P)H dehydrogenase (quinone) from Geobacter sulfurreducens (strain ATCC 51573 / DSM 12127 / PCA).